Here is a 644-residue protein sequence, read N- to C-terminus: Phosphomethylpyrimidine synthase (644 aa).

Residues Asn236, Met265, Tyr294, His330, 350-352 (SRG), 391-394 (DGLR), and Glu430 each bind substrate. His434 lines the Zn(2+) pocket. Tyr457 is a substrate binding site. His498 serves as a coordination point for Zn(2+). Residues Cys578, Cys581, and Cys586 each contribute to the [4Fe-4S] cluster site.

It belongs to the ThiC family. As to quaternary structure, homodimer. [4Fe-4S] cluster serves as cofactor.

It carries out the reaction 5-amino-1-(5-phospho-beta-D-ribosyl)imidazole + S-adenosyl-L-methionine = 4-amino-2-methyl-5-(phosphooxymethyl)pyrimidine + CO + 5'-deoxyadenosine + formate + L-methionine + 3 H(+). It functions in the pathway cofactor biosynthesis; thiamine diphosphate biosynthesis. Its function is as follows. Catalyzes the synthesis of the hydroxymethylpyrimidine phosphate (HMP-P) moiety of thiamine from aminoimidazole ribotide (AIR) in a radical S-adenosyl-L-methionine (SAM)-dependent reaction. The protein is Phosphomethylpyrimidine synthase of Aliivibrio fischeri (strain ATCC 700601 / ES114) (Vibrio fischeri).